The chain runs to 262 residues: Acyl-[acyl-carrier-protein]--UDP-N-acetylglucosamine O-acyltransferase (262 aa).

The protein belongs to the transferase hexapeptide repeat family. LpxA subfamily. In terms of assembly, homotrimer.

It localises to the cytoplasm. It catalyses the reaction a (3R)-hydroxyacyl-[ACP] + UDP-N-acetyl-alpha-D-glucosamine = a UDP-3-O-[(3R)-3-hydroxyacyl]-N-acetyl-alpha-D-glucosamine + holo-[ACP]. The protein operates within glycolipid biosynthesis; lipid IV(A) biosynthesis; lipid IV(A) from (3R)-3-hydroxytetradecanoyl-[acyl-carrier-protein] and UDP-N-acetyl-alpha-D-glucosamine: step 1/6. Involved in the biosynthesis of lipid A, a phosphorylated glycolipid that anchors the lipopolysaccharide to the outer membrane of the cell. The chain is Acyl-[acyl-carrier-protein]--UDP-N-acetylglucosamine O-acyltransferase from Aliivibrio salmonicida (strain LFI1238) (Vibrio salmonicida (strain LFI1238)).